The chain runs to 298 residues: KH domain-containing protein At1g09660/At1g09670 (298 aa).

One can recognise a KH domain in the interval 152–219 (DVPVDKYPSY…EHLCEPLHVL (68 aa)). The disordered stretch occupies residues 266-298 (NGTLREESPSPSLSPCLSPSMSPFNSKRAKTEI). Phosphoserine occurs at positions 273 and 287. A compositionally biased stretch (low complexity) spans 274-288 (PSPSLSPCLSPSMSP).

It is found in the nucleus. This chain is KH domain-containing protein At1g09660/At1g09670, found in Arabidopsis thaliana (Mouse-ear cress).